A 1449-amino-acid polypeptide reads, in one-letter code: Gag-Pol polyprotein (1449 aa).

The N-myristoyl glycine; by host moiety is linked to residue Gly2. Residues 16-22 carry the Nuclear export signal motif; it reads LEKVRLR. Positions 26-32 match the Nuclear localization signal motif; that stretch reads KKKYMLK. Positions 215 to 237 are disordered; that stretch reads DLQHPQPGPLPAGQLREPRGSDI. 2 CCHC-type zinc fingers span residues 392-409 and 413-430; these read IKCW…QCRA and QGCW…KCPE. A disordered region spans residues 442–494; it reads GKEAPQFPHGPDASGADTNCSPRGSSCGSTEELHEDGQKAEGEQRETLQGGDR. Residues 457–470 show a composition bias toward polar residues; sequence ADTNCSPRGSSCGS. The span at 472 to 487 shows a compositional bias: basic and acidic residues; that stretch reads EELHEDGQKAEGEQRE. The 70-residue stretch at 518 to 587 folds into the Peptidase A2 domain; the sequence is VEVLLDTGAD…TPINIFGRNL (70 aa). The active-site For protease activity; shared with dimeric partner is the Asp523. The Reverse transcriptase domain occupies 641–831; it reads DGQLEEAPPT…PPFQWMGYEL (191 aa). Residues Asp707, Asp782, and Asp783 each coordinate Mg(2+). The RT 'primer grip' stretch occupies residues 824 to 832; it reads FQWMGYELW. The Tryptophan repeat motif signature appears at 994-1010; it reads WEQWWTDYWQVTWIPDW. The RNase H type-1 domain maps to 1030-1153; the sequence is IQGAETFYVD…VDHLVSQGIR (124 aa). Asp1039, Glu1074, Asp1094, and Asp1145 together coordinate Mg(2+). An Integrase-type zinc finger spans residues 1159–1200; sequence KKIEPAQEEHEKYHSNVKELVFKFGLPRLVAKQIVDTCDKCH. 4 residues coordinate Zn(2+): His1168, His1172, Cys1196, and Cys1199. An Integrase catalytic domain is found at 1210–1360; it reads VNAELGTWQM…TPAERLVNMI (151 aa). The Mg(2+) site is built by Asp1220 and Asp1272. Positions 1379–1426 form a DNA-binding region, integrase-type; it reads FRVYYREGRDQLWKGPGELLWKGEGAVILKVGTEIKVVPRRKAKIIKD.

Homotrimer. Interacts with gp41 (via C-terminus). In terms of assembly, homodimer. The active site consists of two apposed aspartic acid residues. As to quaternary structure, heterodimer of p66 RT and p51 RT (RT p66/p51). Heterodimerization of RT is essential for DNA polymerase activity. Despite the sequence identities, p66 RT and p51 RT have distinct folding. Homotetramer; may further associate as a homohexadecamer. Mg(2+) serves as cofactor. Post-translationally, specific enzymatic cleavages by the viral protease yield mature proteins. The protease is released by autocatalytic cleavage. The polyprotein is cleaved during and after budding, this process is termed maturation. Proteolytic cleavage of p66 RT removes the RNase H domain to yield the p51 RT subunit. Capsid protein p24 is phosphorylated.

The protein resides in the virion. It localises to the host nucleus. It is found in the host cytoplasm. The protein localises to the host cell membrane. It carries out the reaction Specific for a P1 residue that is hydrophobic, and P1' variable, but often Pro.. The catalysed reaction is Endohydrolysis of RNA in RNA/DNA hybrids. Three different cleavage modes: 1. sequence-specific internal cleavage of RNA. Human immunodeficiency virus type 1 and Moloney murine leukemia virus enzymes prefer to cleave the RNA strand one nucleotide away from the RNA-DNA junction. 2. RNA 5'-end directed cleavage 13-19 nucleotides from the RNA end. 3. DNA 3'-end directed cleavage 15-20 nucleotides away from the primer terminus.. The enzyme catalyses 3'-end directed exonucleolytic cleavage of viral RNA-DNA hybrid.. It catalyses the reaction DNA(n) + a 2'-deoxyribonucleoside 5'-triphosphate = DNA(n+1) + diphosphate. Its activity is regulated as follows. The viral protease is inhibited by many synthetic protease inhibitors (PIs), such as amprenavir, atazanavir, indinavir, loprinavir, nelfinavir, ritonavir and saquinavir. RT can be inhibited either by nucleoside RT inhibitors (NRTIs) or by non nucleoside RT inhibitors (NNRTIs). NRTIs act as chain terminators, whereas NNRTIs inhibit DNA polymerization by binding a small hydrophobic pocket near the RT active site and inducing an allosteric change in this region. Classical NRTIs are abacavir, adefovir (PMEA), didanosine (ddI), lamivudine (3TC), stavudine (d4T), tenofovir (PMPA), zalcitabine (ddC), and zidovudine (AZT). Classical NNRTIs are atevirdine (BHAP U-87201E), delavirdine, efavirenz (DMP-266), emivirine (I-EBU), and nevirapine (BI-RG-587). The tritherapies used as a basic effective treatment of AIDS associate two NRTIs and one NNRTI. Use of protease inhibitors in tritherapy regimens permit more ambitious therapeutic strategies. Gag-Pol polyprotein and Gag polyprotein may regulate their own translation, by the binding genomic RNA in the 5'-UTR. At low concentration, Gag-Pol and Gag would promote translation, whereas at high concentration, the polyproteins encapsidate genomic RNA and then shut off translation. In terms of biological role, matrix protein p17 has two main functions: in infected cell, it targets Gag and Gag-pol polyproteins to the plasma membrane via a multipartite membrane-binding signal, that includes its myristointegration complex. The myristoylation signal and the NLS exert conflicting influences its subcellular localization. The key regulation of these motifs might be phosphorylation of a portion of MA molecules on the C-terminal tyrosine at the time of virus maturation, by virion-associated cellular tyrosine kinase. Implicated in the release from host cell mediated by Vpu. Its function is as follows. Capsid protein p24 forms the conical core that encapsulates the genomic RNA-nucleocapsid complex in the virion. The core is constituted by capsid protein hexamer subunits. The core is disassembled soon after virion entry. Interaction with host PPIA/CYPA protects the virus from restriction by host TRIM5-alpha and from an unknown antiviral activity in host cells. This capsid restriction by TRIM5 is one of the factors which restricts SIV to the simian species. Functionally, nucleocapsid protein p7 encapsulates and protects viral dimeric unspliced (genomic) RNA. Binds these RNAs through its zinc fingers. Facilitates rearangement of nucleic acid secondary structure during retrotranscription of genomic RNA. This capability is referred to as nucleic acid chaperone activity. The aspartyl protease mediates proteolytic cleavages of Gag and Gag-Pol polyproteins during or shortly after the release of the virion from the plasma membrane. Cleavages take place as an ordered, step-wise cascade to yield mature proteins. This process is called maturation. Displays maximal activity during the budding process just prior to particle release from the cell. Also cleaves Nef and Vif, probably concomitantly with viral structural proteins on maturation of virus particles. Hydrolyzes host EIF4GI and PABP1 in order to shut off the capped cellular mRNA translation. The resulting inhibition of cellular protein synthesis serves to ensure maximal viral gene expression and to evade host immune response. In terms of biological role, reverse transcriptase/ribonuclease H (RT) is a multifunctional enzyme that converts the viral dimeric RNA genome into dsDNA in the cytoplasm, shortly after virus entry into the cell. This enzyme displays a DNA polymerase activity that can copy either DNA or RNA templates, and a ribonuclease H (RNase H) activity that cleaves the RNA strand of RNA-DNA heteroduplexes in a partially processive 3' to 5' endonucleasic mode. Conversion of viral genomic RNA into dsDNA requires many steps. A tRNA binds to the primer-binding site (PBS) situated at the 5'-end of the viral RNA. RT uses the 3' end of the tRNA primer to perform a short round of RNA-dependent minus-strand DNA synthesis. The reading proceeds through the U5 region and ends after the repeated (R) region which is present at both ends of viral RNA. The portion of the RNA-DNA heteroduplex is digested by the RNase H, resulting in a ssDNA product attached to the tRNA primer. This ssDNA/tRNA hybridizes with the identical R region situated at the 3' end of viral RNA. This template exchange, known as minus-strand DNA strong stop transfer, can be either intra- or intermolecular. RT uses the 3' end of this newly synthesized short ssDNA to perform the RNA-dependent minus-strand DNA synthesis of the whole template. RNase H digests the RNA template except for two polypurine tracts (PPTs) situated at the 5'-end and near the center of the genome. It is not clear if both polymerase and RNase H activities are simultaneous. RNase H can probably proceed both in a polymerase-dependent (RNA cut into small fragments by the same RT performing DNA synthesis) and a polymerase-independent mode (cleavage of remaining RNA fragments by free RTs). Secondly, RT performs DNA-directed plus-strand DNA synthesis using the PPTs that have not been removed by RNase H as primers. PPTs and tRNA primers are then removed by RNase H. The 3' and 5' ssDNA PBS regions hybridize to form a circular dsDNA intermediate. Strand displacement synthesis by RT to the PBS and PPT ends produces a blunt ended, linear dsDNA copy of the viral genome that includes long terminal repeats (LTRs) at both ends. Its function is as follows. Integrase catalyzes viral DNA integration into the host chromosome, by performing a series of DNA cutting and joining reactions. This enzyme activity takes place after virion entry into a cell and reverse transcription of the RNA genome in dsDNA. The first step in the integration process is 3' processing. This step requires a complex comprising the viral genome, matrix protein, Vpr and integrase. This complex is called the pre-integration complex (PIC). The integrase protein removes 2 nucleotides from each 3' end of the viral DNA, leaving recessed CA OH's at the 3' ends. In the second step, the PIC enters cell nucleus. This process is mediated through integrase and Vpr proteins, and allows the virus to infect a non dividing cell. This ability to enter the nucleus is specific of lentiviruses, other retroviruses cannot and rely on cell division to access cell chromosomes. In the third step, termed strand transfer, the integrase protein joins the previously processed 3' ends to the 5' ends of strands of target cellular DNA at the site of integration. The 5'-ends are produced by integrase-catalyzed staggered cuts, 5 bp apart. A Y-shaped, gapped, recombination intermediate results, with the 5'-ends of the viral DNA strands and the 3' ends of target DNA strands remaining unjoined, flanking a gap of 5 bp. The last step is viral DNA integration into host chromosome. This involves host DNA repair synthesis in which the 5 bp gaps between the unjoined strands are filled in and then ligated. Since this process occurs at both cuts flanking the SIV genome, a 5 bp duplication of host DNA is produced at the ends of SIV integration. Alternatively, Integrase may catalyze the excision of viral DNA just after strand transfer, this is termed disintegration. This is Gag-Pol polyprotein (gag-pol) from Cercopithecidae (Old World monkeys).